An 828-amino-acid chain; its full sequence is Class I hydrophobin hum3 (828 aa).

The first 22 residues, 1-22, serve as a signal peptide directing secretion; that stretch reads MKYLQFLAAVAAVSAFSGPVLA. Residues asparagine 156, asparagine 222, and asparagine 738 are each glycosylated (N-linked (GlcNAc...) asparagine). Cystine bridges form between cysteine 750–cysteine 808, cysteine 757–cysteine 802, cysteine 758–cysteine 788, and cysteine 809–cysteine 822. An N-linked (GlcNAc...) asparagine glycan is attached at asparagine 811.

In the C-terminal section; belongs to the fungal hydrophobin family. In terms of assembly, self-assembles to form functional amyloid fibrils called rodlets. Self-assembly into fibrillar rodlets occurs spontaneously at hydrophobic:hydrophilic interfaces and the rodlets further associate laterally to form amphipathic monolayers. Hum3 is an atypical hydrophobin that consists in a repetitive repellent-like region that spans 578 aa which is separated from a hydrophobin-like domain by a spacer region containing three possible kex2 processing sites. The repetitive region contains 17 amphipathic repeats of 31-36 aa each of them with a C-terminal putative kex2 processing motif.

It localises to the secreted. It is found in the cell wall. Aerial growth, conidiation, and dispersal of filamentous fungi in the environment rely upon a capability of their secreting small amphipathic proteins called hydrophobins (HPBs) with low sequence identity. Class I can self-assemble into an outermost layer of rodlet bundles on aerial cell surfaces, conferring cellular hydrophobicity that supports fungal growth, development and dispersal; whereas Class II form highly ordered films at water-air interfaces through intermolecular interactions but contribute nothing to the rodlet structure. Atypical class I hydrophobin that is preceded by a signal sequence and 17 imperfect repeats. The repeated peptides might function as repellents whereas the class I hydrophobin seems not to be crucial for the formation of aerial hyphae. Hydrophobins of Mycosarcoma maydis have been functionally replaced, at least partially, by repellents. Hum3 and rsp1 together are pathogenicity proteins that share an essential function in early stages of the infection. The polypeptide is Class I hydrophobin hum3 (Mycosarcoma maydis (Corn smut fungus)).